The primary structure comprises 114 residues: Beta-microseminoprotein E1 (114 aa).

Positions 1–20 (MNVLLGGLVIFATFVTLCNG) are cleaved as a signal peptide. 5 disulfides stabilise this stretch: Cys-22–Cys-70, Cys-38–Cys-62, Cys-57–Cys-93, Cys-60–Cys-69, and Cys-84–Cys-107.

The protein belongs to the beta-microseminoprotein family.

The protein resides in the secreted. The chain is Beta-microseminoprotein E1 (MSPE) from Saguinus oedipus (Cotton-top tamarin).